We begin with the raw amino-acid sequence, 441 residues long: Tryptophan aminotransferase-related protein 1 (441 aa).

Pyridoxal 5'-phosphate is bound by residues Y110, 152 to 153 (ST), N219, 239 to 242 (DLAY), 262 to 265 (TVSK), and R273. K265 carries the N6-(pyridoxal phosphate)lysine modification.

This sequence belongs to the alliinase family. Requires pyridoxal 5'-phosphate as cofactor. Highly expressed in anthers. Expressed at low levels in ovaries.

It catalyses the reaction L-tryptophan + 2-oxoglutarate = indole-3-pyruvate + L-glutamate. It participates in plant hormone metabolism; auxin biosynthesis. Probable tryptophan aminotransferase that may be involved in the regulation of auxin production in developing rice grains. This chain is Tryptophan aminotransferase-related protein 1, found in Oryza sativa subsp. japonica (Rice).